The primary structure comprises 180 residues: Nucleoside triphosphate/diphosphate phosphatase (180 aa).

Catalysis depends on Arg-26, which acts as the Proton donor. Mg(2+)-binding residues include Asn-90, Asp-106, Asp-108, Asp-110, Asp-123, and Glu-126.

Belongs to the Ntdp family. It depends on Mg(2+) as a cofactor.

It carries out the reaction a ribonucleoside 5'-triphosphate + H2O = a ribonucleoside 5'-diphosphate + phosphate + H(+). The catalysed reaction is a ribonucleoside 5'-diphosphate + H2O = a ribonucleoside 5'-phosphate + phosphate + H(+). Functionally, has nucleoside phosphatase activity towards nucleoside triphosphates and nucleoside diphosphates. The sequence is that of Nucleoside triphosphate/diphosphate phosphatase from Staphylococcus aureus (strain MRSA252).